We begin with the raw amino-acid sequence, 110 residues long: Large ribosomal subunit protein P2B (110 aa).

A Phosphoserine modification is found at serine 29. Lysine 49 participates in a covalent cross-link: Glycyl lysine isopeptide (Lys-Gly) (interchain with G-Cter in ubiquitin). Residues valine 66 to aspartate 110 form a disordered region. Positions glycine 69–aspartate 86 are enriched in low complexity. Residues alanine 87–methionine 104 show a composition bias toward acidic residues. A Phosphoserine modification is found at serine 100.

This sequence belongs to the eukaryotic ribosomal protein P1/P2 family. In terms of assembly, component of the large ribosomal subunit (LSU). Mature yeast ribosomes consist of a small (40S) and a large (60S) subunit. The 40S small subunit contains 1 molecule of ribosomal RNA (18S rRNA) and 33 different proteins (encoded by 57 genes). The large 60S subunit contains 3 rRNA molecules (25S, 5.8S and 5S rRNA) and 46 different proteins (encoded by 81 genes). The 5 acidic ribosomal P-proteins form the stalk structure of the 60S subunit. They are organized as a pentameric complex in which uL10/P0 interacts with 2 heterodimers, P1A-P2B and P1B-P2A. Post-translationally, the N-terminus is not modified.

The protein resides in the cytoplasm. Its function is as follows. Component of the ribosome, a large ribonucleoprotein complex responsible for the synthesis of proteins in the cell. The small ribosomal subunit (SSU) binds messenger RNAs (mRNAs) and translates the encoded message by selecting cognate aminoacyl-transfer RNA (tRNA) molecules. The large subunit (LSU) contains the ribosomal catalytic site termed the peptidyl transferase center (PTC), which catalyzes the formation of peptide bonds, thereby polymerizing the amino acids delivered by tRNAs into a polypeptide chain. The nascent polypeptides leave the ribosome through a tunnel in the LSU and interact with protein factors that function in enzymatic processing, targeting, and the membrane insertion of nascent chains at the exit of the ribosomal tunnel. The chain is Large ribosomal subunit protein P2B from Saccharomyces cerevisiae (strain ATCC 204508 / S288c) (Baker's yeast).